The sequence spans 378 residues: uncharacterized protein (378 aa).

The For GATase activity role is filled by Cys-16. The Glutamine amidotransferase type-2 domain maps to 16–378; the sequence is CGLFGVIDRS…ELAKQLSEVE (363 aa).

This is an uncharacterized protein from Archaeoglobus fulgidus (strain ATCC 49558 / DSM 4304 / JCM 9628 / NBRC 100126 / VC-16).